Consider the following 575-residue polypeptide: Isocitrate dehydrogenase kinase/phosphatase (575 aa).

ATP-binding positions include 315-321 and K336; that span reads APGVKGM. D371 is a catalytic residue.

Belongs to the AceK family.

The protein resides in the cytoplasm. The enzyme catalyses L-seryl-[isocitrate dehydrogenase] + ATP = O-phospho-L-seryl-[isocitrate dehydrogenase] + ADP + H(+). In terms of biological role, bifunctional enzyme which can phosphorylate or dephosphorylate isocitrate dehydrogenase (IDH) on a specific serine residue. This is a regulatory mechanism which enables bacteria to bypass the Krebs cycle via the glyoxylate shunt in response to the source of carbon. When bacteria are grown on glucose, IDH is fully active and unphosphorylated, but when grown on acetate or ethanol, the activity of IDH declines drastically concomitant with its phosphorylation. This is Isocitrate dehydrogenase kinase/phosphatase from Yersinia enterocolitica serotype O:8 / biotype 1B (strain NCTC 13174 / 8081).